A 91-amino-acid polypeptide reads, in one-letter code: Small ribosomal subunit protein uS19 (91 aa).

It belongs to the universal ribosomal protein uS19 family.

In terms of biological role, protein S19 forms a complex with S13 that binds strongly to the 16S ribosomal RNA. In Synechococcus sp. (strain WH7803), this protein is Small ribosomal subunit protein uS19.